The sequence spans 217 residues: tRNA (guanine-N(7)-)-methyltransferase (217 aa).

S-adenosyl-L-methionine-binding residues include E43, D68, N101, and N123. Position 127 (K127) interacts with substrate. The segment at 129 to 134 (RHNKRR) is interaction with RNA. Residues D159 and 196–199 (TEYE) contribute to the substrate site.

Belongs to the class I-like SAM-binding methyltransferase superfamily. TrmB family.

The enzyme catalyses guanosine(46) in tRNA + S-adenosyl-L-methionine = N(7)-methylguanosine(46) in tRNA + S-adenosyl-L-homocysteine. Its pathway is tRNA modification; N(7)-methylguanine-tRNA biosynthesis. Functionally, catalyzes the formation of N(7)-methylguanine at position 46 (m7G46) in tRNA. The chain is tRNA (guanine-N(7)-)-methyltransferase from Clostridium botulinum (strain Loch Maree / Type A3).